A 371-amino-acid polypeptide reads, in one-letter code: tRNA-specific 2-thiouridylase MnmA (371 aa).

ATP contacts are provided by residues 16–23 (GMSGGVDS) and M42. Positions 102–104 (NPD) are interaction with target base in tRNA. C107 functions as the Nucleophile in the catalytic mechanism. Cysteines 107 and 204 form a disulfide. An ATP-binding site is contributed by G132. The segment at 154–156 (KDQ) is interaction with tRNA. C204 functions as the Cysteine persulfide intermediate in the catalytic mechanism. The interval 316 to 317 (RY) is interaction with tRNA.

Belongs to the MnmA/TRMU family.

The protein localises to the cytoplasm. The catalysed reaction is S-sulfanyl-L-cysteinyl-[protein] + uridine(34) in tRNA + AH2 + ATP = 2-thiouridine(34) in tRNA + L-cysteinyl-[protein] + A + AMP + diphosphate + H(+). In terms of biological role, catalyzes the 2-thiolation of uridine at the wobble position (U34) of tRNA, leading to the formation of s(2)U34. The polypeptide is tRNA-specific 2-thiouridylase MnmA (Shewanella pealeana (strain ATCC 700345 / ANG-SQ1)).